A 308-amino-acid chain; its full sequence is Putative acetyl-hydrolase LipR (308 aa).

An N-terminal signal peptide occupies residues 1-40 (MNLRKNVIRSVLRGARPLFASRRLGIAGRRVLLATLTAGA). The Involved in the stabilization of the negatively charged intermediate by the formation of the oxyanion hole motif lies at 76–78 (HGG). Residues serine 146, aspartate 239, and histidine 269 contribute to the active site.

It belongs to the 'GDXG' lipolytic enzyme family.

Required for maintaining the appropriate mycolic acid composition and permeability of the envelope on its exposure to acidic pH. The polypeptide is Putative acetyl-hydrolase LipR (lipR) (Mycobacterium tuberculosis (strain ATCC 25618 / H37Rv)).